A 213-amino-acid polypeptide reads, in one-letter code: Small ribosomal subunit protein uS4 (213 aa).

The tract at residues 16 to 53 (GTDLGLKSGVKPYDVKTKKSARPPGQHGVSRNKSSEYS) is disordered. Residues 44–53 (VSRNKSSEYS) are compositionally biased toward polar residues. Residues 97-163 (SRLDNVVYRM…EKSREQLRIK (67 aa)) enclose the S4 RNA-binding domain.

It belongs to the universal ribosomal protein uS4 family. As to quaternary structure, part of the 30S ribosomal subunit. Contacts protein S5. The interaction surface between S4 and S5 is involved in control of translational fidelity.

In terms of biological role, one of the primary rRNA binding proteins, it binds directly to 16S rRNA where it nucleates assembly of the body of the 30S subunit. Functionally, with S5 and S12 plays an important role in translational accuracy. The chain is Small ribosomal subunit protein uS4 from Psychrobacter arcticus (strain DSM 17307 / VKM B-2377 / 273-4).